A 466-amino-acid chain; its full sequence is Muscarinic acetylcholine receptor M2 (466 aa).

Residues methionine 1–glutamate 25 lie on the Extracellular side of the membrane. Asparagine 2, asparagine 3, and asparagine 8 each carry an N-linked (GlcNAc...) asparagine glycan. A helical membrane pass occupies residues valine 26–methionine 48. The Cytoplasmic segment spans residues valine 49 to asparagine 62. The helical transmembrane segment at tyrosine 63–tyrosine 83 threads the bilayer. At threonine 84–aspartate 100 the chain is on the extracellular side. Cysteines 99 and 179 form a disulfide. The chain crosses the membrane as a helical span at residues leucine 101 to phenylalanine 122. An Important for signaling motif is present at residues aspartate 123 to tyrosine 125. Over aspartate 123 to methionine 142 the chain is Cytoplasmic. The chain crosses the membrane as a helical span at residues alanine 143–tryptophan 165. Over glutamine 166–proline 187 the chain is Extracellular. Residues alanine 188–isoleucine 212 traverse the membrane as a helical segment. Residues serine 213–arginine 387 lie on the Cytoplasmic side of the membrane. Disordered stretches follow at residues glycine 223–asparagine 265 and glutamine 279–glutamine 315. 2 stretches are compositionally biased toward polar residues: residues alanine 228–leucine 238 and proline 246–aspartate 256. A compositionally biased stretch (low complexity) spans asparagine 287 to asparagine 298. A helical membrane pass occupies residues threonine 388–asparagine 410. The Extracellular segment spans residues serine 411–proline 418. A disulfide bridge links cysteine 413 with cysteine 416. The chain crosses the membrane as a helical span at residues glycine 419 to leucine 442. An Important for signaling motif is present at residues asparagine 436–tyrosine 440. Over cysteine 443–arginine 466 the chain is Cytoplasmic. Residues threonine 446, threonine 450, and threonine 465 each carry the phosphothreonine modification.

It belongs to the G-protein coupled receptor 1 family. Muscarinic acetylcholine receptor subfamily. CHRM2 sub-subfamily.

Its subcellular location is the cell membrane. It localises to the postsynaptic cell membrane. Its function is as follows. The muscarinic acetylcholine receptor mediates various cellular responses, including inhibition of adenylate cyclase, breakdown of phosphoinositides and modulation of potassium channels through the action of G proteins. Primary transducing effect is adenylate cyclase inhibition. Signaling promotes phospholipase C activity, leading to the release of inositol trisphosphate (IP3); this then triggers calcium ion release into the cytosol. This is Muscarinic acetylcholine receptor M2 (CHRM2) from Gallus gallus (Chicken).